A 334-amino-acid polypeptide reads, in one-letter code: Fructose-1,6-bisphosphatase class 1 (334 aa).

4 residues coordinate Mg(2+): glutamate 92, aspartate 114, leucine 116, and aspartate 117. Residues 117–120 and asparagine 209 each bind substrate; that span reads DGSS. Glutamate 281 is a Mg(2+) binding site.

This sequence belongs to the FBPase class 1 family. As to quaternary structure, homotetramer. Mg(2+) serves as cofactor.

Its subcellular location is the cytoplasm. The catalysed reaction is beta-D-fructose 1,6-bisphosphate + H2O = beta-D-fructose 6-phosphate + phosphate. It participates in carbohydrate biosynthesis; gluconeogenesis. The protein is Fructose-1,6-bisphosphatase class 1 of Nitrosomonas europaea (strain ATCC 19718 / CIP 103999 / KCTC 2705 / NBRC 14298).